Reading from the N-terminus, the 169-residue chain is Mitochondrial ATP-independent inner membrane protease subunit 1b (169 aa).

Catalysis depends on residues S47 and K91.

Belongs to the peptidase S26 family. IMP1 subfamily. Heterodimer of 2 subunits, IMP1A/B and IMP12.

It localises to the mitochondrion inner membrane. Its function is as follows. Catalyzes the removal of transit peptides required for the targeting of proteins from the mitochondrial matrix, across the inner membrane, into the inter-membrane space. The polypeptide is Mitochondrial ATP-independent inner membrane protease subunit 1b (Arabidopsis thaliana (Mouse-ear cress)).